The sequence spans 74 residues: Exodeoxyribonuclease 7 small subunit (74 aa).

The protein belongs to the XseB family. Heterooligomer composed of large and small subunits.

The protein localises to the cytoplasm. The catalysed reaction is Exonucleolytic cleavage in either 5'- to 3'- or 3'- to 5'-direction to yield nucleoside 5'-phosphates.. In terms of biological role, bidirectionally degrades single-stranded DNA into large acid-insoluble oligonucleotides, which are then degraded further into small acid-soluble oligonucleotides. This is Exodeoxyribonuclease 7 small subunit from Neisseria meningitidis serogroup A / serotype 4A (strain DSM 15465 / Z2491).